Reading from the N-terminus, the 223-residue chain is UPF0441 protein YgiB (223 aa).

The span at 178-195 (TVPKTAMAPKPATTTTVT) shows a compositional bias: low complexity. Residues 178–223 (TVPKTAMAPKPATTTTVTRGGFGESVAKQSTMQRSAAGTSTRSMGG) are disordered. The segment covering 204 to 223 (AKQSTMQRSAAGTSTRSMGG) has biased composition (polar residues).

Belongs to the UPF0441 family.

This is UPF0441 protein YgiB from Salmonella heidelberg (strain SL476).